Consider the following 134-residue polypeptide: Calvin cycle protein CP12-3, chloroplastic (134 aa).

A disordered region spans residues M1–R21. The transit peptide at M1–S42 directs the protein to the chloroplast. Cystine bridges form between C78-C87 and C120-C129.

This sequence belongs to the CP12 family. Monomer. Component of a complex that contains two dimers of PRK, two tetramers of GAPDH and CP12. CP12 associates with GAPDH, causing its conformation to change. This GAPDH/CP12 complex binds PRK to form a half-complex (one unit). This unit probably dimerizes due partially to interactions between the enzymes of each unit. Contains two disulfide bonds; only the oxidized protein, with two disulfide bonds, is active in complex formation. The C-terminal disulfide is involved in the interaction with GAPDH and the N-terminal disulfide mediates the binding of PRK with this binary complex. As to expression, mostly expressed, at low levels, in stems and, to a lesser extent, in leaves and roots.

It is found in the plastid. The protein resides in the chloroplast. Its function is as follows. Acts as a linker essential in the assembly of a core complex of PRK/GAPDH. Coordinates the reversible inactivation of chloroplast enzymes GAPDH and PRK during darkness in photosynthetic tissues. This chain is Calvin cycle protein CP12-3, chloroplastic (CP12-3), found in Arabidopsis thaliana (Mouse-ear cress).